Reading from the N-terminus, the 300-residue chain is Acetylglutamate kinase (300 aa).

Residues 72 to 73, arginine 94, and asparagine 197 contribute to the substrate site; that span reads GG.

Belongs to the acetylglutamate kinase family. ArgB subfamily.

It localises to the cytoplasm. It catalyses the reaction N-acetyl-L-glutamate + ATP = N-acetyl-L-glutamyl 5-phosphate + ADP. The protein operates within amino-acid biosynthesis; L-arginine biosynthesis; N(2)-acetyl-L-ornithine from L-glutamate: step 2/4. Its function is as follows. Catalyzes the ATP-dependent phosphorylation of N-acetyl-L-glutamate. The protein is Acetylglutamate kinase of Azoarcus sp. (strain BH72).